The primary structure comprises 491 residues: Glutamyl-tRNA(Gln) amidotransferase subunit A (491 aa).

Catalysis depends on charge relay system residues Lys-78 and Ser-158. The active-site Acyl-ester intermediate is the Ser-182.

This sequence belongs to the amidase family. GatA subfamily. In terms of assembly, heterotrimer of A, B and C subunits.

The enzyme catalyses L-glutamyl-tRNA(Gln) + L-glutamine + ATP + H2O = L-glutaminyl-tRNA(Gln) + L-glutamate + ADP + phosphate + H(+). Its function is as follows. Allows the formation of correctly charged Gln-tRNA(Gln) through the transamidation of misacylated Glu-tRNA(Gln) in organisms which lack glutaminyl-tRNA synthetase. The reaction takes place in the presence of glutamine and ATP through an activated gamma-phospho-Glu-tRNA(Gln). The chain is Glutamyl-tRNA(Gln) amidotransferase subunit A from Bradyrhizobium sp. (strain ORS 278).